The sequence spans 393 residues: Putative N(4)-(beta-N-acetylglucosaminyl)-L-asparaginase GM21137 (393 aa).

A signal peptide spans 1 to 23 (MRTHLRASLWVLCLASTAFSILA). Cystine bridges form between Cys97/Cys102 and Cys196/Cys212. Residue Thr243 is the Nucleophile of the active site. Substrate contacts are provided by residues 271–274 (RVGD) and 294–297 (TGDG). A disulfide bridge connects residues Cys354 and Cys381.

It belongs to the Ntn-hydrolase family. In terms of assembly, heterotetramer of two alpha and two beta chains arranged as a dimer of alpha/beta heterodimers. Post-translationally, cleaved into an alpha and beta chain by autocatalysis; this activates the enzyme. The N-terminal residue of the beta subunit is responsible for the nucleophile hydrolase activity.

The enzyme catalyses N(4)-(beta-N-acetyl-D-glucosaminyl)-L-asparagine + H2O = N-acetyl-beta-D-glucosaminylamine + L-aspartate + H(+). In terms of biological role, cleaves the GlcNAc-Asn bond which joins oligosaccharides to the peptide of asparagine-linked glycoproteins. This is Putative N(4)-(beta-N-acetylglucosaminyl)-L-asparaginase GM21137 from Drosophila sechellia (Fruit fly).